We begin with the raw amino-acid sequence, 150 residues long: Large ribosomal subunit protein bL9 (150 aa).

Belongs to the bacterial ribosomal protein bL9 family.

In terms of biological role, binds to the 23S rRNA. This Verminephrobacter eiseniae (strain EF01-2) protein is Large ribosomal subunit protein bL9.